Consider the following 238-residue polypeptide: MKRSKAYRAAAEKINPENLYSPLDAVRLAQETSTTKYDATVEVAIRLGVDPRKADQMVRGTVNLPHGTGKSPRVAVFAAGEKAAEATAAGADIVGSDDLVARIQEGFLDFDATVATPDQMAKVGRIARILGPRGLMPNPKTGTVTLDIGKAVADIKGGKINFRVDKQGNLHIVIGKTNFTDAQLIENYTAALDEIVRVKPSAAKGRYLKKVTFATTMGPGIPVDPNRTRNLLEESVPA.

This sequence belongs to the universal ribosomal protein uL1 family. Part of the 50S ribosomal subunit.

In terms of biological role, binds directly to 23S rRNA. The L1 stalk is quite mobile in the ribosome, and is involved in E site tRNA release. Its function is as follows. Protein L1 is also a translational repressor protein, it controls the translation of the L11 operon by binding to its mRNA. This is Large ribosomal subunit protein uL1 from Frankia alni (strain DSM 45986 / CECT 9034 / ACN14a).